Here is a 188-residue protein sequence, read N- to C-terminus: dCTP deaminase (188 aa).

DCTP is bound by residues 111–116 (KSTYAR), 135–137 (VLE), Gln-156, Tyr-170, and Gln-180. Glu-137 (proton donor/acceptor) is an active-site residue.

The protein belongs to the dCTP deaminase family. In terms of assembly, homotrimer.

The catalysed reaction is dCTP + H2O + H(+) = dUTP + NH4(+). It functions in the pathway pyrimidine metabolism; dUMP biosynthesis; dUMP from dCTP (dUTP route): step 1/2. Catalyzes the deamination of dCTP to dUTP. This Protochlamydia amoebophila (strain UWE25) protein is dCTP deaminase.